We begin with the raw amino-acid sequence, 879 residues long: Alanine--tRNA ligase (879 aa).

The Zn(2+) site is built by His-567, His-571, Cys-669, and His-673.

This sequence belongs to the class-II aminoacyl-tRNA synthetase family. It depends on Zn(2+) as a cofactor.

The protein resides in the cytoplasm. The catalysed reaction is tRNA(Ala) + L-alanine + ATP = L-alanyl-tRNA(Ala) + AMP + diphosphate. Catalyzes the attachment of alanine to tRNA(Ala) in a two-step reaction: alanine is first activated by ATP to form Ala-AMP and then transferred to the acceptor end of tRNA(Ala). Also edits incorrectly charged Ser-tRNA(Ala) and Gly-tRNA(Ala) via its editing domain. This chain is Alanine--tRNA ligase, found in Lactobacillus helveticus (strain DPC 4571).